The chain runs to 289 residues: Carbonyl reductase [NADPH] 1 (289 aa).

Serine 2 bears the N-acetylserine mark. Serine 2 carries the post-translational modification Phosphoserine. NADP(+) contacts are provided by residues 10-34 (VTGA…GDVV), 63-64 (DI), and asparagine 90. Residues 95–97 (FQL) and glutamine 106 each bind glutathione. Serine 140 contacts substrate. 193-194 (TY) lines the glutathione pocket. The Proton acceptor role is filled by tyrosine 194. Residues 194–198 (YGVTK) and 231–233 (VRT) contribute to the NADP(+) site. Lysine 239 carries the post-translational modification N6-1-carboxyethyl lysine.

It belongs to the short-chain dehydrogenases/reductases (SDR) family. In terms of assembly, monomer. Expressed in kidney (at protein level).

It is found in the cytoplasm. The enzyme catalyses a secondary alcohol + NADP(+) = a ketone + NADPH + H(+). It carries out the reaction prostaglandin E1 + NADP(+) = 15-oxoprostaglandin E1 + NADPH + H(+). The catalysed reaction is prostaglandin F2alpha + NADP(+) = prostaglandin E2 + NADPH + H(+). It catalyses the reaction prostaglandin D2 + NADP(+) = 15-oxoprostaglandin D2 + NADPH + H(+). The enzyme catalyses prostaglandin E2 + NADP(+) = 15-oxoprostaglandin E2 + NADPH + H(+). It carries out the reaction prostaglandin F2alpha + NADP(+) = 15-oxoprostaglandin F2alpha + NADPH + H(+). The catalysed reaction is menadione + NADPH + H(+) = menadiol + NADP(+). It catalyses the reaction daunorubicin + NADPH + H(+) = 13-dihydrodaunorubicin + NADP(+). The enzyme catalyses S-nitrosoglutathione + NADPH + H(+) = S-(hydroxysulfenamide)glutathione + NADP(+). It carries out the reaction a primary alcohol + NADP(+) = an aldehyde + NADPH + H(+). The catalysed reaction is cortisol + NADPH + H(+) = 20beta-dihydrocortisol + NADP(+). It catalyses the reaction corticosterone + NADPH + H(+) = 20beta-dihydrocorticosterone + NADP(+). In terms of biological role, NADPH-dependent reductase with broad substrate specificity. Catalyzes the reduction of a wide variety of carbonyl compounds including quinones, prostaglandins, menadione, plus various xenobiotics. Catalyzes the reduction of the antitumor anthracyclines doxorubicin and daunorubicin to the cardiotoxic compounds doxorubicinol and daunorubicinol. Can convert prostaglandin E2 to prostaglandin F2-alpha. Can bind glutathione, which explains its higher affinity for glutathione-conjugated substrates. Catalyzes the reduction of S-nitrosoglutathione. In addition, participates in the glucocorticoid metabolism by catalyzing the NADPH-dependent cortisol/corticosterone into 20beta-dihydrocortisol (20b-DHF) or 20beta-corticosterone (20b-DHB), which are weak agonists of NR3C1 and NR3C2 in adipose tissue. The sequence is that of Carbonyl reductase [NADPH] 1 from Sus scrofa (Pig).